The chain runs to 194 residues: Orotate phosphoribosyltransferase (194 aa).

117–125 (EDVVTTGLS) lines the 5-phospho-alpha-D-ribose 1-diphosphate pocket. Orotate-binding residues include Thr-121 and Arg-149.

The protein belongs to the purine/pyrimidine phosphoribosyltransferase family. PyrE subfamily. In terms of assembly, homodimer. Requires Mg(2+) as cofactor.

The enzyme catalyses orotidine 5'-phosphate + diphosphate = orotate + 5-phospho-alpha-D-ribose 1-diphosphate. It functions in the pathway pyrimidine metabolism; UMP biosynthesis via de novo pathway; UMP from orotate: step 1/2. In terms of biological role, catalyzes the transfer of a ribosyl phosphate group from 5-phosphoribose 1-diphosphate to orotate, leading to the formation of orotidine monophosphate (OMP). This chain is Orotate phosphoribosyltransferase, found in Novosphingobium aromaticivorans (strain ATCC 700278 / DSM 12444 / CCUG 56034 / CIP 105152 / NBRC 16084 / F199).